The primary structure comprises 232 residues: 5'-methylthioadenosine/S-adenosylhomocysteine nucleosidase (232 aa).

Glu-14 functions as the Proton acceptor in the catalytic mechanism. Residues Gly-80, Val-154, and Met-175–Glu-176 each bind substrate. Catalysis depends on Asp-199, which acts as the Proton donor.

The protein belongs to the PNP/UDP phosphorylase family. MtnN subfamily.

It catalyses the reaction S-adenosyl-L-homocysteine + H2O = S-(5-deoxy-D-ribos-5-yl)-L-homocysteine + adenine. The enzyme catalyses S-methyl-5'-thioadenosine + H2O = 5-(methylsulfanyl)-D-ribose + adenine. It carries out the reaction 5'-deoxyadenosine + H2O = 5-deoxy-D-ribose + adenine. Its pathway is amino-acid biosynthesis; L-methionine biosynthesis via salvage pathway; S-methyl-5-thio-alpha-D-ribose 1-phosphate from S-methyl-5'-thioadenosine (hydrolase route): step 1/2. Catalyzes the irreversible cleavage of the glycosidic bond in both 5'-methylthioadenosine (MTA) and S-adenosylhomocysteine (SAH/AdoHcy) to adenine and the corresponding thioribose, 5'-methylthioribose and S-ribosylhomocysteine, respectively. Also cleaves 5'-deoxyadenosine, a toxic by-product of radical S-adenosylmethionine (SAM) enzymes, into 5-deoxyribose and adenine. This chain is 5'-methylthioadenosine/S-adenosylhomocysteine nucleosidase, found in Haemophilus ducreyi (strain 35000HP / ATCC 700724).